Reading from the N-terminus, the 125-residue chain is Large ribosomal subunit protein bL12 (125 aa).

The protein belongs to the bacterial ribosomal protein bL12 family. In terms of assembly, homodimer. Part of the ribosomal stalk of the 50S ribosomal subunit. Forms a multimeric L10(L12)X complex, where L10 forms an elongated spine to which 2 to 4 L12 dimers bind in a sequential fashion. Binds GTP-bound translation factors.

Forms part of the ribosomal stalk which helps the ribosome interact with GTP-bound translation factors. Is thus essential for accurate translation. In Campylobacter curvus (strain 525.92), this protein is Large ribosomal subunit protein bL12.